The primary structure comprises 123 residues: MLQNSELLQEYLPIAIFFGIAVLLSVLIMILPNLLSTKKYNKDKLEPYECGFEPFSDARSKFDIRFYLVAILFIIFDLEIAFLVPWAISLNTIGKMGFFSMMFFLFVLIIGFIYEWTKGALDW.

3 helical membrane passes run 11–31, 68–88, and 93–113; these read YLPI…IMIL, LVAI…PWAI, and IGKM…IGFI.

This sequence belongs to the complex I subunit 3 family. NDH-1 is composed of 14 different subunits. Subunits NuoA, H, J, K, L, M, N constitute the membrane sector of the complex.

It is found in the cell inner membrane. It carries out the reaction a quinone + NADH + 5 H(+)(in) = a quinol + NAD(+) + 4 H(+)(out). Its function is as follows. NDH-1 shuttles electrons from NADH, via FMN and iron-sulfur (Fe-S) centers, to quinones in the respiratory chain. The immediate electron acceptor for the enzyme in this species is believed to be ubiquinone. Couples the redox reaction to proton translocation (for every two electrons transferred, four hydrogen ions are translocated across the cytoplasmic membrane), and thus conserves the redox energy in a proton gradient. In Rickettsia prowazekii (strain Madrid E), this protein is NADH-quinone oxidoreductase subunit A.